Reading from the N-terminus, the 344-residue chain is Mitochondrial mRNA pseudouridine synthase Rpusd3 (344 aa).

Residues 1–36 (MGALRVLRYVSMIWRPELGSCARQRDAGFGTEARRP) constitute a mitochondrion transit peptide. The interval 25–53 (RDAGFGTEARRPSQPHRSSKHKDLVEDQP) is disordered.

This sequence belongs to the pseudouridine synthase RluA family. As to quaternary structure, forms a regulatory protein-RNA complex, consisting of RCC1L, NGRN, RPUSD3, RPUSD4, TRUB2, FASTKD2 and 16S mt-rRNA.

The protein localises to the mitochondrion matrix. It carries out the reaction a uridine in mRNA = a pseudouridine in mRNA. In terms of biological role, catalyzes uridine to pseudouridine isomerization (pseudouridylation) of specific mitochondrial mRNAs (mt-mRNAs), a post-transcriptional modification necessary for their translation. Acts at position 390 in COXI mt-mRNA and at position 697-699 in mitochondrial COXIII mt-mRNA. As a component of a functional protein-RNA module, consisting of RCC1L, NGRN, RPUSD3, RPUSD4, TRUB2, FASTKD2 and 16S mitochondrial ribosomal RNA (16S mt-rRNA), controls 16S mt-rRNA abundance and may play a role in mitochondrial ribosome biogenesis. This is Mitochondrial mRNA pseudouridine synthase Rpusd3 (Rpusd3) from Mus musculus (Mouse).